The sequence spans 266 residues: Eukaryotic translation initiation factor 3 subunit J (266 aa).

Disordered regions lie at residues 1–142 (MAPS…VSDS) and 215–243 (MSNE…VSLV). The span at 26–44 (DEEEEDVLDSWDAAEDSEV) shows a compositional bias: acidic residues. Residues 40–99 (EDSEVEREKAAKAAEAKAKAEAEAAAKKKSKAQRIQEHKEERKKREEEDSSSESEEDEAE) adopt a coiled-coil conformation. Composition is skewed to basic and acidic residues over residues 45-65 (EREK…EAAA) and 73-86 (RIQE…KREE). Residues 87-97 (EDSSSESEEDE) show a composition bias toward acidic residues. Basic and acidic residues-rich tracts occupy residues 98 to 118 (AERR…HAED) and 218 to 230 (EKMR…DKGN).

The protein belongs to the eIF-3 subunit J family. Component of the eukaryotic translation initiation factor 3 (eIF-3) complex.

The protein resides in the cytoplasm. Component of the eukaryotic translation initiation factor 3 (eIF-3) complex, which is involved in protein synthesis of a specialized repertoire of mRNAs and, together with other initiation factors, stimulates binding of mRNA and methionyl-tRNAi to the 40S ribosome. The eIF-3 complex specifically targets and initiates translation of a subset of mRNAs involved in cell proliferation. This Aspergillus terreus (strain NIH 2624 / FGSC A1156) protein is Eukaryotic translation initiation factor 3 subunit J (hcr1).